A 530-amino-acid chain; its full sequence is Glutamate--cysteine ligase (530 aa).

It belongs to the glutamate--cysteine ligase type 1 family. Type 1 subfamily.

The enzyme catalyses L-cysteine + L-glutamate + ATP = gamma-L-glutamyl-L-cysteine + ADP + phosphate + H(+). It participates in sulfur metabolism; glutathione biosynthesis; glutathione from L-cysteine and L-glutamate: step 1/2. The chain is Glutamate--cysteine ligase from Azotobacter vinelandii (strain DJ / ATCC BAA-1303).